We begin with the raw amino-acid sequence, 878 residues long: Phosphoenolpyruvate carboxylase (878 aa).

Residues His-138 and Lys-545 contribute to the active site.

The protein belongs to the PEPCase type 1 family. It depends on Mg(2+) as a cofactor.

The catalysed reaction is oxaloacetate + phosphate = phosphoenolpyruvate + hydrogencarbonate. Functionally, forms oxaloacetate, a four-carbon dicarboxylic acid source for the tricarboxylic acid cycle. This is Phosphoenolpyruvate carboxylase from Shewanella loihica (strain ATCC BAA-1088 / PV-4).